A 514-amino-acid chain; its full sequence is Anthranilate synthase component 1 (514 aa).

Residues T40 and P290–M292 contribute to the L-tryptophan site. G327–T328 serves as a coordination point for chorismate. E360 lines the Mg(2+) pocket. Residues Y448, R468, G482–G484, and G484 contribute to the chorismate site. E497 contacts Mg(2+).

Belongs to the anthranilate synthase component I family. Heterotetramer consisting of two non-identical subunits: a beta subunit (TrpG) and a large alpha subunit (TrpE). Mg(2+) serves as cofactor.

It catalyses the reaction chorismate + L-glutamine = anthranilate + pyruvate + L-glutamate + H(+). The protein operates within amino-acid biosynthesis; L-tryptophan biosynthesis; L-tryptophan from chorismate: step 1/5. Feedback inhibited by tryptophan. Its function is as follows. Part of a heterotetrameric complex that catalyzes the two-step biosynthesis of anthranilate, an intermediate in the biosynthesis of L-tryptophan. In the first step, the glutamine-binding beta subunit (TrpG) of anthranilate synthase (AS) provides the glutamine amidotransferase activity which generates ammonia as a substrate that, along with chorismate, is used in the second step, catalyzed by the large alpha subunit of AS (TrpE) to produce anthranilate. In the absence of TrpG, TrpE can synthesize anthranilate directly from chorismate and high concentrations of ammonia. This chain is Anthranilate synthase component 1 (trpE), found in Buchnera aphidicola subsp. Rhopalosiphum padi.